The primary structure comprises 82 residues: Small ribosomal subunit protein uS17 (82 aa).

Belongs to the universal ribosomal protein uS17 family. As to quaternary structure, part of the 30S ribosomal subunit.

In terms of biological role, one of the primary rRNA binding proteins, it binds specifically to the 5'-end of 16S ribosomal RNA. The polypeptide is Small ribosomal subunit protein uS17 (Afipia carboxidovorans (strain ATCC 49405 / DSM 1227 / KCTC 32145 / OM5) (Oligotropha carboxidovorans)).